The chain runs to 619 residues: E3 ubiquitin-protein ligase DTX4 (619 aa).

2 consecutive WWE domains span residues 1–78 and 79–155; these read MLLA…PVRR and NYYD…RVRR. 2 disordered regions span residues 238–281 and 358–389; these read KPLD…PGPN and PPPVSKSEIKSIPGVSNTSRKTTKKQAKKGKT. The segment covering 261 to 273 has biased composition (polar residues); it reads QASSMPTGTTMGS. A compositionally biased stretch (basic residues) spans 378-387; sequence KTTKKQAKKG. The RING-type; atypical zinc finger occupies 409–468; the sequence is CTICMERLTAPSGYKGPQPTVKPDLVGKLSRCGHVYHIYCLVAMYNNGNKDGSLQCPTCK.

It belongs to the Deltex family. Interacts with NLRP4.

The protein resides in the cytoplasm. It carries out the reaction S-ubiquitinyl-[E2 ubiquitin-conjugating enzyme]-L-cysteine + [acceptor protein]-L-lysine = [E2 ubiquitin-conjugating enzyme]-L-cysteine + N(6)-ubiquitinyl-[acceptor protein]-L-lysine.. It functions in the pathway protein modification; protein ubiquitination. In terms of biological role, regulator of Notch signaling, a signaling pathway involved in cell-cell communications that regulates a broad spectrum of cell-fate determinations. Functions as a ubiquitin ligase protein in vivo, mediating 'Lys48'-linked polyubiquitination and promoting degradation of TBK1, targeting to TBK1 requires interaction with NLRP4. The protein is E3 ubiquitin-protein ligase DTX4 (DTX4) of Homo sapiens (Human).